A 267-amino-acid polypeptide reads, in one-letter code: N-acetylgalactosamine permease IIC component 1 (267 aa).

Over methionine 1–leucine 10 the chain is Periplasmic. Positions methionine 1–valine 237 constitute a PTS EIIC type-4 domain. A helical membrane pass occupies residues serine 11 to phenylalanine 31. Topologically, residues arginine 32–proline 33 are cytoplasmic. The chain crosses the membrane as a helical span at residues isoleucine 34 to glycine 54. The Periplasmic portion of the chain corresponds to glycine 55 to proline 66. Residues alanine 67–tryptophan 87 traverse the membrane as a helical segment. The Cytoplasmic segment spans residues serine 88–lysine 94. Residues threonine 95–tyrosine 115 form a helical membrane-spanning segment. The Periplasmic portion of the chain corresponds to serine 116–asparagine 141. The helical transmembrane segment at tryptophan 142–leucine 162 threads the bilayer. Topologically, residues alanine 163–tryptophan 177 are cytoplasmic. The helical transmembrane segment at leucine 178 to leucine 198 threads the bilayer. The Periplasmic portion of the chain corresponds to arginine 199–tyrosine 209. A helical membrane pass occupies residues leucine 210–valine 230. The Cytoplasmic portion of the chain corresponds to leucine 231–isoleucine 267.

The protein localises to the cell inner membrane. Its function is as follows. The phosphoenolpyruvate-dependent sugar phosphotransferase system (PTS), a major carbohydrate active -transport system, catalyzes the phosphorylation of incoming sugar substrates concomitant with their translocation across the cell membrane. This system is involved in N-acetylgalactosamine transport. In Escherichia coli (strain K12), this protein is N-acetylgalactosamine permease IIC component 1 (agaC).